We begin with the raw amino-acid sequence, 122 residues long: Putative ankyrin repeat protein L22 (122 aa).

ANK repeat units follow at residues 3-32, 33-62, 63-92, and 94-122; these read DNNY…DIKA, DDDY…DIRV, NNDY…NIRA, and DDYA…VLNQ.

This Acanthamoeba polyphaga (Amoeba) protein is Putative ankyrin repeat protein L22.